Here is a 266-residue protein sequence, read N- to C-terminus: Small ribosomal subunit protein uS2 (266 aa).

Residues 247–266 (EGENNYSNNRSWNKPERTNN) are disordered. Positions 249 to 258 (ENNYSNNRSW) are enriched in polar residues.

It belongs to the universal ribosomal protein uS2 family.

This chain is Small ribosomal subunit protein uS2, found in Mesoplasma florum (strain ATCC 33453 / NBRC 100688 / NCTC 11704 / L1) (Acholeplasma florum).